The sequence spans 639 residues: Centromere protein T (639 aa).

Disordered stretches follow at residues 1 to 64, 266 to 294, 307 to 451, 458 to 477, and 494 to 534; these read MDGR…RPNA, QLSD…GLVS, SEKD…ERGT, AAEE…ESEE, and QPVL…TREP. Low complexity predominate over residues 12–23; that stretch reads RAAPTPRVAVRS. The segment at 80-500 is flexible stalk domain; that stretch reads IIQNQPQVSP…YRPQPVLSPP (421 aa). Positions 267 to 281 are enriched in polar residues; that stretch reads LSDSKTSAQRSNTSY. Composition is skewed to basic and acidic residues over residues 307–319, 329–338, 356–371, and 432–449; these read SEKD…EHVD, QGEEEQDHSQ, TEHH…SEKK, and PGAK…EIER. The span at 458 to 469 shows a compositional bias: acidic residues; it reads AAEEEATDDESD.

This sequence belongs to the CENP-T/CNN1 family. In terms of assembly, component of the CENPA-CAD complex, composed of CENPI, CENPK, CENPL, CENPO, CENPP, CENPQ, CENPR and CENPS. The CENPA-CAD complex is probably recruited on centromeres by the CENPA-NAC complex, at least composed of CENPA, CENPC, CENPH, CENPM, CENPN, CENPT and CENPU. Identified in a centromeric complex containing histones H2A, H2B, H3 and H4, and at least CENPA, CENPB, CENPC, CENPT, CENPN, HJURP, SUPT16H, SSRP1 and RSF1. Interacts (via N-terminus) with the NDC80 complex. Heterodimer with CENPW; this dimer coassembles with CENPS-CENPX heterodimers at centromeres to form the tetrameric CENP-T-W-S-X complex.

The protein localises to the nucleus. Its subcellular location is the chromosome. The protein resides in the centromere. It is found in the kinetochore. Functionally, component of the CENPA-NAC (nucleosome-associated) complex, a complex that plays a central role in assembly of kinetochore proteins, mitotic progression and chromosome segregation. The CENPA-NAC complex recruits the CENPA-CAD (nucleosome distal) complex and may be involved in incorporation of newly synthesized CENPA into centromeres. Part of a nucleosome-associated complex that binds specifically to histone H3-containing nucleosomes at the centromere, as opposed to nucleosomes containing CENPA. Component of the heterotetrameric CENP-T-W-S-X complex that binds and supercoils DNA, and plays an important role in kinetochore assembly. CENPT has a fundamental role in kinetochore assembly and function. It is one of the inner kinetochore proteins, with most further proteins binding downstream. Required for normal chromosome organization and normal progress through mitosis. In Gallus gallus (Chicken), this protein is Centromere protein T (CENPT).